We begin with the raw amino-acid sequence, 141 residues long: Transmembrane protein 216 (141 aa).

4 helical membrane-spanning segments follow: residues 15–35 (ILFFLNGWYYATYFLLELLIF), 49–69 (LVLDVVMLLLYLGIEVIRLFF), 82–102 (LGISVALTFPSAMMASYYLLL), and 115–135 (SILLFFCGSELLLEMLTLATF).

In terms of assembly, part of the tectonic-like complex (also named B9 complex). Interacts with TMEM107.

The protein resides in the membrane. Its subcellular location is the cytoplasm. It is found in the cytoskeleton. It localises to the cilium basal body. Functionally, part of the tectonic-like complex which is required for tissue-specific ciliogenesis and may regulate ciliary membrane composition. In Rattus norvegicus (Rat), this protein is Transmembrane protein 216 (Tmem216).